Here is a 252-residue protein sequence, read N- to C-terminus: Ribosomal RNA small subunit methyltransferase J (252 aa).

S-adenosyl-L-methionine contacts are provided by residues 101 to 102 (RD), 117 to 118 (ER), 153 to 154 (SS), and D171.

Belongs to the methyltransferase superfamily. RsmJ family.

The protein resides in the cytoplasm. It carries out the reaction guanosine(1516) in 16S rRNA + S-adenosyl-L-methionine = N(2)-methylguanosine(1516) in 16S rRNA + S-adenosyl-L-homocysteine + H(+). Functionally, specifically methylates the guanosine in position 1516 of 16S rRNA. This is Ribosomal RNA small subunit methyltransferase J from Salmonella paratyphi B (strain ATCC BAA-1250 / SPB7).